A 140-amino-acid chain; its full sequence is Large ribosomal subunit protein uL11 (140 aa).

This sequence belongs to the universal ribosomal protein uL11 family. In terms of assembly, part of the ribosomal stalk of the 50S ribosomal subunit. Interacts with L10 and the large rRNA to form the base of the stalk. L10 forms an elongated spine to which L12 dimers bind in a sequential fashion forming a multimeric L10(L12)X complex. Post-translationally, one or more lysine residues are methylated.

Its function is as follows. Forms part of the ribosomal stalk which helps the ribosome interact with GTP-bound translation factors. The protein is Large ribosomal subunit protein uL11 of Nitratidesulfovibrio vulgaris (strain ATCC 29579 / DSM 644 / CCUG 34227 / NCIMB 8303 / VKM B-1760 / Hildenborough) (Desulfovibrio vulgaris).